Here is a 229-residue protein sequence, read N- to C-terminus: Trypsin (229 aa).

A propeptide spans 1 to 7 (APDDDDK) (activation peptide). Residues 8 to 227 (IVGGYECPKH…YVSWIHETIA (220 aa)) form the Peptidase S1 domain. Intrachain disulfides connect Cys-14–Cys-143, Cys-32–Cys-48, Cys-116–Cys-216, Cys-123–Cys-189, Cys-154–Cys-168, and Cys-179–Cys-203. Residue His-47 is the Charge relay system of the active site. Ca(2+) contacts are provided by Glu-59 and Glu-69. The active-site Charge relay system is Asp-91. Catalysis depends on Ser-183, which acts as the Charge relay system.

It belongs to the peptidase S1 family. Ca(2+) serves as cofactor.

Its subcellular location is the secreted. The protein resides in the extracellular space. The catalysed reaction is Preferential cleavage: Arg-|-Xaa, Lys-|-Xaa.. This Squalus acanthias (Spiny dogfish) protein is Trypsin.